Consider the following 417-residue polypeptide: Serine hydroxymethyltransferase 1 (417 aa).

(6S)-5,6,7,8-tetrahydrofolate-binding positions include Leu-121 and 125 to 127 (GHL). N6-(pyridoxal phosphate)lysine is present on Lys-230. 355–357 (SPF) contacts (6S)-5,6,7,8-tetrahydrofolate.

Belongs to the SHMT family. Homodimer. Requires pyridoxal 5'-phosphate as cofactor.

The protein localises to the cytoplasm. The enzyme catalyses (6R)-5,10-methylene-5,6,7,8-tetrahydrofolate + glycine + H2O = (6S)-5,6,7,8-tetrahydrofolate + L-serine. Its pathway is one-carbon metabolism; tetrahydrofolate interconversion. It functions in the pathway amino-acid biosynthesis; glycine biosynthesis; glycine from L-serine: step 1/1. Catalyzes the reversible interconversion of serine and glycine with tetrahydrofolate (THF) serving as the one-carbon carrier. This reaction serves as the major source of one-carbon groups required for the biosynthesis of purines, thymidylate, methionine, and other important biomolecules. Also exhibits THF-independent aldolase activity toward beta-hydroxyamino acids, producing glycine and aldehydes, via a retro-aldol mechanism. This chain is Serine hydroxymethyltransferase 1, found in Pseudomonas putida (strain ATCC 47054 / DSM 6125 / CFBP 8728 / NCIMB 11950 / KT2440).